A 392-amino-acid polypeptide reads, in one-letter code: Phosphoglycerate kinase (392 aa).

Substrate is bound by residues D21–N23, R36, H59–R62, R118, and R151. Residues K201, G292, E323, and G349–S352 each bind ATP.

The protein belongs to the phosphoglycerate kinase family. In terms of assembly, monomer.

The protein resides in the cytoplasm. It carries out the reaction (2R)-3-phosphoglycerate + ATP = (2R)-3-phospho-glyceroyl phosphate + ADP. It participates in carbohydrate degradation; glycolysis; pyruvate from D-glyceraldehyde 3-phosphate: step 2/5. This chain is Phosphoglycerate kinase, found in Borrelia duttonii (strain Ly).